The chain runs to 536 residues: Chaperonin GroEL (536 aa).

ATP is bound by residues Thr29–Pro32, Asp86–Thr90, Gly412, and Asp493.

Belongs to the chaperonin (HSP60) family. Forms a cylinder of 14 subunits composed of two heptameric rings stacked back-to-back. Interacts with the co-chaperonin GroES.

It localises to the cytoplasm. It carries out the reaction ATP + H2O + a folded polypeptide = ADP + phosphate + an unfolded polypeptide.. In terms of biological role, together with its co-chaperonin GroES, plays an essential role in assisting protein folding. The GroEL-GroES system forms a nano-cage that allows encapsulation of the non-native substrate proteins and provides a physical environment optimized to promote and accelerate protein folding. This chain is Chaperonin GroEL, found in Aster yellows witches'-broom phytoplasma (strain AYWB).